The primary structure comprises 311 residues: N-acetylmuramic acid 6-phosphate etherase (311 aa).

The region spanning 66–229 is the SIS domain; it reads VADRMARGGR…STITMIRLGK (164 aa). The active-site Proton donor is Glu94. Glu125 is an active-site residue.

This sequence belongs to the GCKR-like family. MurNAc-6-P etherase subfamily. In terms of assembly, homodimer.

The catalysed reaction is N-acetyl-D-muramate 6-phosphate + H2O = N-acetyl-D-glucosamine 6-phosphate + (R)-lactate. Its pathway is amino-sugar metabolism; N-acetylmuramate degradation. Functionally, specifically catalyzes the cleavage of the D-lactyl ether substituent of MurNAc 6-phosphate, producing GlcNAc 6-phosphate and D-lactate. The chain is N-acetylmuramic acid 6-phosphate etherase from Streptomyces avermitilis (strain ATCC 31267 / DSM 46492 / JCM 5070 / NBRC 14893 / NCIMB 12804 / NRRL 8165 / MA-4680).